The chain runs to 461 residues: Cysteine--tRNA ligase (461 aa).

C28 provides a ligand contact to Zn(2+). Positions 30–40 match the 'HIGH' region motif; that stretch reads ITVYDLCHIGH. Positions 209, 234, and 238 each coordinate Zn(2+). Positions 266–270 match the 'KMSKS' region motif; it reads KMSKS. Residue K269 participates in ATP binding.

It belongs to the class-I aminoacyl-tRNA synthetase family. Monomer. Zn(2+) serves as cofactor.

The protein localises to the cytoplasm. It carries out the reaction tRNA(Cys) + L-cysteine + ATP = L-cysteinyl-tRNA(Cys) + AMP + diphosphate. This is Cysteine--tRNA ligase from Escherichia coli O127:H6 (strain E2348/69 / EPEC).